Reading from the N-terminus, the 537-residue chain is Copine-3 (537 aa).

C2 domains lie at 1–115 (MAAQ…TRPL) and 124–247 (GKGS…PVEF). Ser-14 is modified (phosphoserine). Positions 22, 28, 81, 83, 93, 154, and 160 each coordinate Ca(2+). Phosphoserine is present on Ser-197. Ca(2+)-binding residues include Asp-216, Asp-218, and Asp-224. Ser-243 bears the Phosphoserine mark. One can recognise a VWFA domain in the interval 291–513 (NFTVGVDFTG…AQCVLAEIPQ (223 aa)).

This sequence belongs to the copine family. As to quaternary structure, monomer. Interacts with ERBB2 (preferentially with the tyrosine phosphorylated form); this interaction occurs at the cell membrane and is increased in a growth factor heregulin-dependent manner. Interacts with SHC1; this interaction may mediate the binding of CPNE3 with ERBB2. Interacts with RACK1. It depends on Ca(2+) as a cofactor. Post-translationally, phosphorylated on serine and threonine residues. In terms of tissue distribution, expressed in breast and weakly in prostate and ovarian tissues. Expressed in neutrophils (at protein level). Widely expressed. Expressed in the brain. Expressed in neutrophil precursors from the bone marrow and peripheral blood. Expressed in primary breast tumors and ovarian endometrioid adenocarcinoma.

The protein localises to the nucleus. It localises to the cytoplasm. Its subcellular location is the cell membrane. It is found in the cell junction. The protein resides in the focal adhesion. Its function is as follows. Calcium-dependent phospholipid-binding protein that plays a role in ERBB2-mediated tumor cell migration in response to growth factor heregulin stimulation. The chain is Copine-3 from Homo sapiens (Human).